The primary structure comprises 130 residues: Biotin carboxyl carrier protein (130 aa).

The tract at residues Glu-20–Met-64 is disordered. Over residues Glu-23 to Lys-46 the composition is skewed to polar residues. A compositionally biased stretch (low complexity) spans Gln-47 to Met-64. The Biotinyl-binding domain maps to Ala-55–Ala-130. The residue at position 96 (Lys-96) is an N6-biotinyllysine.

The protein is Biotin carboxyl carrier protein (bcc) of Streptococcus mutans serotype c (strain ATCC 700610 / UA159).